The following is a 576-amino-acid chain: MAGUK p55 subfamily member 7 (576 aa).

L27 domains follow at residues 10-65 (SDTG…KQSP) and 67-122 (PILH…YDPV). The 82-residue stretch at 139-220 (IIRLVKNREP…AITFKIIPGS (82 aa)) folds into the PDZ domain. One can recognise an SH3 domain in the interval 228–298 (EGKMFIKALF…PSKHFQERRL (71 aa)). Residues 289-383 (PSKHFQERRL…VGPVGVGLNE (95 aa)) are phospho-regulated basic and hydrophobic (PRBH) motif. One can recognise a Guanylate kinase-like domain in the interval 368–560 (YRLVVLVGPV…AFNELKTTFD (193 aa)). Ser409 carries the phosphoserine modification.

The protein belongs to the MAGUK family. In terms of assembly, heterodimer; able to heterodimerize via its C-terminal L27 domain with LIN7A, LIN7B and LIN7C. Forms a tripartite complex composed of DLG1, MPP7 and LIN7 (LIN7A or LIN7C). Interacts with DLG1 via its N-terminal L27 domain. Interacts with PALS1 and PATJ. Phosphorylated by aPKC which promotes dissociation from the cell cortex.

The protein resides in the membrane. It localises to the lateral cell membrane. The protein localises to the cell junction. Its subcellular location is the tight junction. It is found in the adherens junction. The protein resides in the cytoplasm. It localises to the cell cortex. Functionally, acts as an important adapter that promotes epithelial cell polarity and tight junction formation via its interaction with DLG1. Involved in the assembly of protein complexes at sites of cell-cell contact. The protein is MAGUK p55 subfamily member 7 (MPP7) of Homo sapiens (Human).